Here is a 218-residue protein sequence, read N- to C-terminus: 2-phospho-L-lactate guanylyltransferase (218 aa).

The protein belongs to the CofC family. In terms of assembly, homodimer.

It catalyses the reaction (2S)-2-phospholactate + GTP + H(+) = (2S)-lactyl-2-diphospho-5'-guanosine + diphosphate. The protein operates within cofactor biosynthesis; coenzyme F420 biosynthesis. In terms of biological role, guanylyltransferase that catalyzes the activation of (2S)-2-phospholactate (2-PL) as (2S)-lactyl-2-diphospho-5'-guanosine, via the condensation of 2-PL with GTP. It is involved in the biosynthesis of coenzyme F420, a hydride carrier cofactor. The protein is 2-phospho-L-lactate guanylyltransferase of Methanocaldococcus fervens (strain DSM 4213 / JCM 15782 / AG86) (Methanococcus fervens).